A 92-amino-acid chain; its full sequence is Promotilin (92 aa).

Residues 12–49 (RMQEKERNRGQKKSLGLQQRSEEVGSLDPTEAAEEEGK) form a disordered region.

This sequence belongs to the motilin family.

The protein localises to the secreted. In terms of biological role, plays an important role in the regulation of interdigestive gastrointestinal motility and indirectly causes rhythmic contraction of duodenal and colonic smooth muscle. This is Promotilin (MLN) from Equus caballus (Horse).